Here is a 653-residue protein sequence, read N- to C-terminus: MKNGLKASVVALFFLLAASSASAATNSVDTVTYESNSDFFDGQVLQVGYTSNFATDKINVYLSESKIESETGAVADEPITFDVSHQNTYAKYPTQDTGLESITGWDAVKKTVSSKQELWDWTTTNCVDTNDAGTFTVDGYGTTDVDARANRWFDTWTGQYKYTIYCWQRNDYYGAVADIGSPDEVFRTEWRLQAGDKNPQTAVITNGDGGTGVTSNLGRYAKVSWEGSLSTGENPPLVDDEYALHSNDYEGGWRVISESRYSSYQSFVQNNADDLLGEWGAGLTTESHIESEMNGKAEEAASEFTESPLSDSEILDSSFQNGAFKLDMERSLMYPEFSVYVDAGENGYATISKPVGKPEIVSTSGAEFGELGQGTISVEAENVGDSEGSFSARTDSCGEYFSGNSLQDTQRVSPGGTASFDFRVTFTSTSMTQSEFSDQCEVVVEDTGSGNEVSASVSVTATQEDECTEGDETKKEKQVNGETVDVIMSCTNGLKLEEDEVCSADEEARYIDDDVQYECRDKDSPPGGGGGDPWTIPGLGWQLDTPFGGMEKALSGNAGALTWAQLLLSFIGFLAGFALVGVKLGKMVDGLATEFIPLSDAVVRLGIGLVGGGMAFMAVYQLVTNPLGFLLTVVGLLLTGYLYLKGTTPDINL.

The N-terminal stretch at Met1–Ala23 is a signal peptide. The Extracellular portion of the chain corresponds to Ala24–Gly559. 4 disulfides stabilise this stretch: Cys126–Cys166, Cys397–Cys440, Cys467–Cys490, and Cys502–Cys519. A fusion loop region spans residues Asp154–Gln159. The helical transmembrane segment at Ala560 to Val580 threads the bilayer. Residues Gly581 to Asp600 lie on the Cytoplasmic side of the membrane. The next 2 helical transmembrane spans lie at Ala601 to Gln621 and Leu622 to Leu642. The Cytoplasmic segment spans residues Tyr643–Leu653.

The protein belongs to the HAP2/GCS1 family. Fusexin 1 subfamily. As to quaternary structure, homotrimer stabilized by interdomain contacts and numerous Ca(2+) and Na(+) ions.

Its subcellular location is the cell surface. The protein resides in the cell membrane. Exhibits fusogenic activity. Mediates cell-cell fusion in mammalian cells (bilateral fusion). This chain is Fusexin 1, found in Haloferax sp. (strain Q22).